Here is a 140-residue protein sequence, read N- to C-terminus: Nucleoside diphosphate kinase (140 aa).

Positions 11, 59, 87, 93, 104, and 114 each coordinate ATP. His117 (pros-phosphohistidine intermediate) is an active-site residue.

The protein belongs to the NDK family. In terms of assembly, homotetramer. Mg(2+) is required as a cofactor.

It is found in the cytoplasm. It catalyses the reaction a 2'-deoxyribonucleoside 5'-diphosphate + ATP = a 2'-deoxyribonucleoside 5'-triphosphate + ADP. It carries out the reaction a ribonucleoside 5'-diphosphate + ATP = a ribonucleoside 5'-triphosphate + ADP. Its function is as follows. Major role in the synthesis of nucleoside triphosphates other than ATP. The ATP gamma phosphate is transferred to the NDP beta phosphate via a ping-pong mechanism, using a phosphorylated active-site intermediate. The polypeptide is Nucleoside diphosphate kinase (Rhodopseudomonas palustris (strain HaA2)).